We begin with the raw amino-acid sequence, 161 residues long: SUZ RNA-binding domain-containing (161 aa).

A compositionally biased stretch (acidic residues) spans 1-17; that stretch reads MDDEEVAESWEEAADSG. Residues 1 to 161 form a disordered region; it reads MDDEEVAESW…GTQGFHHQRR (161 aa). A compositionally biased stretch (basic and acidic residues) spans 18–35; sequence EMERRLEEKLRISQKERL. In terms of domain architecture, SUZ spans 42–111; it reads RSPMRTAIVI…ARKRILGSAT (70 aa). Over residues 70-91 the composition is skewed to polar residues; the sequence is PSSNGSLGSSALQTRPSPQVKS. 2 stretches are compositionally biased toward basic and acidic residues: residues 93 to 104 and 116 to 126; these read AQREAEYAEARK and PQERPNSDRSP. The region spanning 116–160 is the SUZ-C domain; that stretch reads PQERPNSDRSPRGSSHTLSEENRPGNHVVRQPAGPDGTQGFHHQR. Position 125 is a phosphoserine (serine 125).

This sequence belongs to the SZRD1 family.

This chain is SUZ RNA-binding domain-containing (szrd1), found in Danio rerio (Zebrafish).